The following is a 292-amino-acid chain: NAD kinase (292 aa).

Asp73 (proton acceptor) is an active-site residue. NAD(+) contacts are provided by residues Asp73–Gly74, Asn147–Glu148, His158, Arg175, Asp177, Thr188–Ser193, and Gln247.

This sequence belongs to the NAD kinase family. The cofactor is a divalent metal cation.

It localises to the cytoplasm. It catalyses the reaction NAD(+) + ATP = ADP + NADP(+) + H(+). In terms of biological role, involved in the regulation of the intracellular balance of NAD and NADP, and is a key enzyme in the biosynthesis of NADP. Catalyzes specifically the phosphorylation on 2'-hydroxyl of the adenosine moiety of NAD to yield NADP. The sequence is that of NAD kinase from Photorhabdus laumondii subsp. laumondii (strain DSM 15139 / CIP 105565 / TT01) (Photorhabdus luminescens subsp. laumondii).